Consider the following 106-residue polypeptide: ATP-dependent Clp protease adapter protein ClpS (106 aa).

This sequence belongs to the ClpS family. As to quaternary structure, binds to the N-terminal domain of the chaperone ClpA.

Its function is as follows. Involved in the modulation of the specificity of the ClpAP-mediated ATP-dependent protein degradation. This chain is ATP-dependent Clp protease adapter protein ClpS, found in Enterobacter sp. (strain 638).